The primary structure comprises 659 residues: RNA polymerase II-associated protein 3 (659 aa).

Thr2 bears the N-acetylthreonine mark. A TPR 1 repeat occupies 8-41 (VELQLQVKHNAEELQDFMRDLEHWEKTMRQKDLE). Residues 39 to 81 (DLELRRQSGVPEENLPPIRNGSFRKKKKRKTKDSSKKTKEENT) are disordered. Basic residues predominate over residues 60-69 (SFRKKKKRKT). Over residues 70–81 (KDSSKKTKEENT) the composition is skewed to basic and acidic residues. Ser87, Ser116, Ser119, and Ser121 each carry phosphoserine. The disordered stretch occupies residues 107–128 (KEDSTHDSVSQESESDEDGVRV). TPR repeat units follow at residues 133–166 (ALVL…DPYN), 168–200 (VLPT…SRSY), 201–234 (TKAY…EPDN), 282–315 (AIAE…DSTN), 317–349 (LLPA…DGSY), and 350–383 (SKAF…EPGN). The disordered stretch occupies residues 447–485 (DAPESSATVPESDRAAVAVDTGRKKDFSQGDSVSSGETP). Ser474 bears the Phosphoserine mark. Lys491 participates in a covalent cross-link: Glycyl lysine isopeptide (Lys-Gly) (interchain with G-Cter in SUMO2).

Belongs to the RPAP3 family. In terms of assembly, tightly associated with the RNA polymerase II complex. Component of the R2TP complex composed at least of RUVBL1, RUVBL2, RPAP3 and PIHD1. Component of the PAQosome complex which is responsible for the biogenesis of several protein complexes and which consists of R2TP complex members RUVBL1, RUVBL2, RPAP3 and PIH1D1, URI complex members PFDN2, PFDN6, PDRG1, UXT and URI1 as well as ASDURF, POLR2E and DNAAF10/WDR92. Interacts with PIH1D1. Interacts with TSC1 and TSC2. Interacts with PRPF8 and EFTUD2 in a ZNHIT2-dependent manner.

Its function is as follows. Forms an interface between the RNA polymerase II enzyme and chaperone/scaffolding protein, suggesting that it is required to connect RNA polymerase II to regulators of protein complex formation. This is RNA polymerase II-associated protein 3 (Rpap3) from Rattus norvegicus (Rat).